Here is a 361-residue protein sequence, read N- to C-terminus: Spermidine/putrescine import ATP-binding protein PotA (361 aa).

Residues 4-234 (LELRDVTRRF…PANRFIADFI (231 aa)) enclose the ABC transporter domain. 36-43 (GPSGCGKT) contributes to the ATP binding site.

Belongs to the ABC transporter superfamily. Spermidine/putrescine importer (TC 3.A.1.11.1) family. In terms of assembly, the complex is composed of two ATP-binding proteins (PotA), two transmembrane proteins (PotB and PotC) and a solute-binding protein (PotD).

It localises to the cell inner membrane. The enzyme catalyses ATP + H2O + polyamine-[polyamine-binding protein]Side 1 = ADP + phosphate + polyamineSide 2 + [polyamine-binding protein]Side 1.. Part of the ABC transporter complex PotABCD involved in spermidine/putrescine import. Responsible for energy coupling to the transport system. The protein is Spermidine/putrescine import ATP-binding protein PotA of Nitrosomonas europaea (strain ATCC 19718 / CIP 103999 / KCTC 2705 / NBRC 14298).